We begin with the raw amino-acid sequence, 1289 residues long: uncharacterized protein (1289 aa).

The 119-residue stretch at 615 to 733 (LDMYDVLKEL…DGMLSYSAQL (119 aa)) folds into the MHD1 domain. The segment at 745 to 774 (DEPSYSLESSDTRSSLSLNNANVNHEKSRS) is disordered. A compositionally biased stretch (low complexity) spans 748 to 762 (SYSLESSDTRSSLSL). Residues 834-966 (AQYHSSHNLE…DDGFPIDFSL (133 aa)) enclose the C2 domain. The region spanning 1044–1184 (YDAILPLFDY…KSVSELKDEV (141 aa)) is the MHD2 domain.

The protein localises to the cytoplasm. This is an uncharacterized protein from Saccharomyces cerevisiae (strain ATCC 204508 / S288c) (Baker's yeast).